Consider the following 143-residue polypeptide: Large ribosomal subunit protein uL11 (143 aa).

This sequence belongs to the universal ribosomal protein uL11 family. In terms of assembly, part of the ribosomal stalk of the 50S ribosomal subunit. Interacts with L10 and the large rRNA to form the base of the stalk. L10 forms an elongated spine to which L12 dimers bind in a sequential fashion forming a multimeric L10(L12)X complex. One or more lysine residues are methylated.

Its function is as follows. Forms part of the ribosomal stalk which helps the ribosome interact with GTP-bound translation factors. The polypeptide is Large ribosomal subunit protein uL11 (Novosphingobium aromaticivorans (strain ATCC 700278 / DSM 12444 / CCUG 56034 / CIP 105152 / NBRC 16084 / F199)).